Consider the following 160-residue polypeptide: Ribosomal RNA large subunit methyltransferase H (160 aa).

Residues Leu-77, Gly-109, and 128–133 (FGRITL) each bind S-adenosyl-L-methionine.

This sequence belongs to the RNA methyltransferase RlmH family. In terms of assembly, homodimer.

It localises to the cytoplasm. The enzyme catalyses pseudouridine(1915) in 23S rRNA + S-adenosyl-L-methionine = N(3)-methylpseudouridine(1915) in 23S rRNA + S-adenosyl-L-homocysteine + H(+). In terms of biological role, specifically methylates the pseudouridine at position 1915 (m3Psi1915) in 23S rRNA. The chain is Ribosomal RNA large subunit methyltransferase H from Oenococcus oeni (strain ATCC BAA-331 / PSU-1).